The primary structure comprises 77 residues: Large ribosomal subunit protein uL24 (77 aa).

Belongs to the universal ribosomal protein uL24 family. Part of the 50S ribosomal subunit.

One of two assembly initiator proteins, it binds directly to the 5'-end of the 23S rRNA, where it nucleates assembly of the 50S subunit. Its function is as follows. One of the proteins that surrounds the polypeptide exit tunnel on the outside of the subunit. The chain is Large ribosomal subunit protein uL24 from Campylobacter fetus subsp. fetus (strain 82-40).